A 480-amino-acid polypeptide reads, in one-letter code: Ammonium transporter 3 member 3 (480 aa).

A run of 11 helical transmembrane segments spans residues 31–51 (SATL…GSIV), 59–79 (SAFM…VWAY), 135–155 (MVYF…GSLL), 169–189 (LWIT…GFLF), 198–218 (GGYV…YWVG), 233–253 (ILLV…FNGG), 265–287 (AVLN…DVFF), 292–314 (SVIG…AGLV), 318–337 (AAIV…MMVL), 361–381 (GFLG…SLFL), and 407–427 (LFVT…ISLI).

This sequence belongs to the ammonia transporter channel (TC 1.A.11.2) family.

It is found in the membrane. Functionally, involved in ammonium transport. This chain is Ammonium transporter 3 member 3 (AMT3-3), found in Oryza sativa subsp. japonica (Rice).